A 287-amino-acid polypeptide reads, in one-letter code: Small ribosomal subunit protein uS3 (287 aa).

One can recognise a KH type-2 domain in the interval 38-106 (IRRLLATGLE…QVQLNILEVK (69 aa)). The interval 216–287 (AAAPAGADRP…AETTTQNPGS (72 aa)) is disordered. Low complexity predominate over residues 238–287 (SGASGTTATSTDAGRAASGTQEAPAAAEAAAGTEAAAGAAAETTTQNPGS).

It belongs to the universal ribosomal protein uS3 family. As to quaternary structure, part of the 30S ribosomal subunit. Forms a tight complex with proteins S10 and S14.

Binds the lower part of the 30S subunit head. Binds mRNA in the 70S ribosome, positioning it for translation. The chain is Small ribosomal subunit protein uS3 from Mycobacterium sp. (strain JLS).